Reading from the N-terminus, the 1316-residue chain is Myosin-5 (1316 aa).

Over residues 1-12 (MAIVKRGGRTKT) the composition is skewed to basic residues. The segment at 1-29 (MAIVKRGGRTKTKQQQVPAKSSGGGSSGG) is disordered. Residues 43–731 (VGVSDLTLLS…TLFALEDMRD (689 aa)) form the Myosin motor domain. Residue 136-143 (GESGAGKT) coordinates ATP. The residue at position 366 (Ser366) is a Phosphoserine. The actin-binding stretch occupies residues 414 to 497 (SIGILDIYGF…PGLFAALNDS (84 aa)). IQ domains lie at 735–755 (HNMA…KEDA) and 756–781 (AKTI…YGNG). The 193-residue stretch at 789–981 (RRRMSMLGSR…TVSVKQGLPA (193 aa)) folds into the TH1 domain. Disordered regions lie at residues 964 to 1154 (NGDH…PTLV) and 1209 to 1316 (DYLK…DDDW). Composition is skewed to polar residues over residues 971 to 984 (GTVS…ASSK) and 1018 to 1030 (PRYN…ANSG). The span at 1042–1065 (QPQQYQPQQSQQQTPYPTQSSIPS) shows a compositional bias: low complexity. The segment covering 1097–1106 (SPTQQRQTPA) has biased composition (polar residues). Over residues 1117 to 1129 (ASTTIATTTSHTS) the composition is skewed to low complexity. Pro residues predominate over residues 1137–1153 (PAPPVKKTAPPPPPPTL). The SH3 domain occupies 1156–1216 (PKFPTYKAMF…PIDYLKECSP (61 aa)). The span at 1223-1232 (APPPPPPPPA) shows a compositional bias: pro residues. The segment covering 1233 to 1268 (ATASAGANGASNPISTTTSTNTTTSSHTTNATSNGS) has biased composition (low complexity). Over residues 1305-1316 (SDDEEEEDDDDW) the composition is skewed to acidic residues.

The protein belongs to the TRAFAC class myosin-kinesin ATPase superfamily. Myosin family. In terms of processing, phosphorylation of the TEDS site (Ser-366) is required for the polarization of the actin cytoskeleton. Phosphorylation probably activates the myosin-I ATPase activity.

It is found in the cytoplasm. Its subcellular location is the cytoskeleton. The protein resides in the actin patch. Type-I myosin implicated in the organization of the actin cytoskeleton. Required for proper actin cytoskeleton polarization and for the internalization step in endocytosis. At the cell cortex, assembles in patch-like structures together with proteins from the actin-polymerizing machinery and promotes actin assembly. Functions as actin nucleation-promoting factor (NPF) for the Arp2/3 complex. Plays a role in chitin deposition in the cell wall, in determination of the budding pattern, and is required for hyphae formation. This chain is Myosin-5 (MYO5), found in Candida albicans (strain SC5314 / ATCC MYA-2876) (Yeast).